The sequence spans 127 residues: Small ribosomal subunit protein bS6 (127 aa).

Belongs to the bacterial ribosomal protein bS6 family.

Binds together with bS18 to 16S ribosomal RNA. The sequence is that of Small ribosomal subunit protein bS6 from Acinetobacter baumannii (strain AB0057).